Here is a 345-residue protein sequence, read N- to C-terminus: Trace amine-associated receptor 6 (345 aa).

Residues Met-1 to Arg-32 are Extracellular-facing. 2 N-linked (GlcNAc...) asparagine glycosylation sites follow: Asn-4 and Asn-19. 2 cysteine pairs are disulfide-bonded: Cys-22-Cys-186 and Cys-105-Cys-190. A helical membrane pass occupies residues Val-33 to Val-53. The Cytoplasmic segment spans residues Met-54 to Asn-68. A helical transmembrane segment spans residues Phe-69–Ser-89. Topologically, residues Met-90–Phe-107 are extracellular. The helical transmembrane segment at His-108–Ile-128 threads the bilayer. Over Asp-129–Ser-147 the chain is Cytoplasmic. The helical transmembrane segment at Val-148–Phe-168 threads the bilayer. Residues Tyr-169–Asp-202 lie on the Extracellular side of the membrane. A helical membrane pass occupies residues Cys-203–Val-223. Topologically, residues Ala-224 to Thr-259 are cytoplasmic. The chain crosses the membrane as a helical span at residues Leu-260–Ile-276. Residues Asp-277–Ala-282 lie on the Extracellular side of the membrane. Residues Phe-283–Tyr-302 traverse the membrane as a helical segment. Residues Asn-303–Ile-345 are Cytoplasmic-facing.

Belongs to the G-protein coupled receptor 1 family.

It is found in the cell membrane. Olfactory receptor specific for trace amines, such as beta-phenylethylamine (beta-PEA). Trace amine compounds are enriched in animal body fluids and act on trace amine-associated receptors (TAARs) to elicit both intraspecific and interspecific innate behaviors. Beta-PEA-binding causes a conformation change that triggers signaling via G(s)-class of G alpha proteins (GNAL or GNAS). In Pan troglodytes (Chimpanzee), this protein is Trace amine-associated receptor 6 (TAAR6).